The chain runs to 363 residues: Small ribosomal subunit biogenesis GTPase RsgA (363 aa).

Residues 112–268 (HQQVIAANID…LIDTPGMREL (157 aa)) enclose the CP-type G domain. GTP is bound by residues 157–160 (TKAD) and 210–218 (GSSGAGKST). Zn(2+)-binding residues include cysteine 291, cysteine 296, histidine 298, and cysteine 304. Residues 340-363 (RVAQNNRGKGSGKRPASVDRPGRR) form a disordered region.

Belongs to the TRAFAC class YlqF/YawG GTPase family. RsgA subfamily. Monomer. Associates with 30S ribosomal subunit, binds 16S rRNA. Zn(2+) serves as cofactor.

The protein localises to the cytoplasm. One of several proteins that assist in the late maturation steps of the functional core of the 30S ribosomal subunit. Helps release RbfA from mature subunits. May play a role in the assembly of ribosomal proteins into the subunit. Circularly permuted GTPase that catalyzes slow GTP hydrolysis, GTPase activity is stimulated by the 30S ribosomal subunit. The chain is Small ribosomal subunit biogenesis GTPase RsgA from Xanthomonas euvesicatoria pv. vesicatoria (strain 85-10) (Xanthomonas campestris pv. vesicatoria).